The chain runs to 81 residues: Translational regulator CsrA (81 aa).

Belongs to the CsrA/RsmA family. Homodimer; the beta-strands of each monomer intercalate to form a hydrophobic core, while the alpha-helices form wings that extend away from the core.

It is found in the cytoplasm. Its function is as follows. A translational regulator that binds mRNA to regulate translation initiation and/or mRNA stability. Usually binds in the 5'-UTR at or near the Shine-Dalgarno sequence preventing ribosome-binding, thus repressing translation. Its main target seems to be the major flagellin gene, while its function is anatagonized by FliW. The protein is Translational regulator CsrA of Borreliella burgdorferi (strain ATCC 35210 / DSM 4680 / CIP 102532 / B31) (Borrelia burgdorferi).